We begin with the raw amino-acid sequence, 220 residues long: Protein GrpE (220 aa).

Composition is skewed to polar residues over residues 1 to 12 (MEQGDKQATYNE) and 50 to 63 (AAST…QTSV). The interval 1–67 (MEQGDKQATY…AEQTSVEAEE (67 aa)) is disordered.

Belongs to the GrpE family. As to quaternary structure, homodimer.

The protein localises to the cytoplasm. Participates actively in the response to hyperosmotic and heat shock by preventing the aggregation of stress-denatured proteins, in association with DnaK and GrpE. It is the nucleotide exchange factor for DnaK and may function as a thermosensor. Unfolded proteins bind initially to DnaJ; upon interaction with the DnaJ-bound protein, DnaK hydrolyzes its bound ATP, resulting in the formation of a stable complex. GrpE releases ADP from DnaK; ATP binding to DnaK triggers the release of the substrate protein, thus completing the reaction cycle. Several rounds of ATP-dependent interactions between DnaJ, DnaK and GrpE are required for fully efficient folding. This Geobacillus thermodenitrificans (strain NG80-2) protein is Protein GrpE.